We begin with the raw amino-acid sequence, 160 residues long: Cyclic pyranopterin monophosphate synthase (160 aa).

Residues 75–77 (LCH) and 113–114 (ME) each bind substrate. Aspartate 128 is a catalytic residue.

Belongs to the MoaC family. Homohexamer; trimer of dimers.

The catalysed reaction is (8S)-3',8-cyclo-7,8-dihydroguanosine 5'-triphosphate = cyclic pyranopterin phosphate + diphosphate. It participates in cofactor biosynthesis; molybdopterin biosynthesis. In terms of biological role, catalyzes the conversion of (8S)-3',8-cyclo-7,8-dihydroguanosine 5'-triphosphate to cyclic pyranopterin monophosphate (cPMP). The sequence is that of Cyclic pyranopterin monophosphate synthase from Methylobacterium sp. (strain 4-46).